We begin with the raw amino-acid sequence, 118 residues long: Large ribosomal subunit protein bL20 (118 aa).

It belongs to the bacterial ribosomal protein bL20 family.

In terms of biological role, binds directly to 23S ribosomal RNA and is necessary for the in vitro assembly process of the 50S ribosomal subunit. It is not involved in the protein synthesizing functions of that subunit. This chain is Large ribosomal subunit protein bL20, found in Trichodesmium erythraeum (strain IMS101).